Here is a 33-residue protein sequence, read N- to C-terminus: MNTELIVQLGSLTLITLAGPLVVVLLFLKQGNL.

A helical membrane pass occupies residues 5–25; the sequence is LIVQLGSLTLITLAGPLVVVL.

Belongs to the Psb30/Ycf12 family. In terms of assembly, PSII is composed of 1 copy each of membrane proteins PsbA, PsbB, PsbC, PsbD, PsbE, PsbF, PsbH, PsbI, PsbJ, PsbK, PsbL, PsbM, PsbT, PsbY, PsbZ, Psb30/Ycf12, peripheral proteins of the oxygen-evolving complex and a large number of cofactors. It forms dimeric complexes.

It localises to the plastid. It is found in the chloroplast thylakoid membrane. A core subunit of photosystem II (PSII), probably helps stabilize the reaction center. The protein is Photosystem II reaction center protein Psb30 of Euglena deses.